The following is a 381-amino-acid chain: Dual-specificity RNA methyltransferase RlmN (381 aa).

Glu96 functions as the Proton acceptor in the catalytic mechanism. The Radical SAM core domain maps to 102–342 (TDDRGTLCVS…TRTTRGDDID (241 aa)). Cys109 and Cys345 are joined by a disulfide. [4Fe-4S] cluster-binding residues include Cys116, Cys120, and Cys123. S-adenosyl-L-methionine contacts are provided by residues 170-171 (GE), Ser202, 224-226 (SLH), and Asn302. The S-methylcysteine intermediate role is filled by Cys345.

Belongs to the radical SAM superfamily. RlmN family. The cofactor is [4Fe-4S] cluster.

It is found in the cytoplasm. It carries out the reaction adenosine(2503) in 23S rRNA + 2 reduced [2Fe-2S]-[ferredoxin] + 2 S-adenosyl-L-methionine = 2-methyladenosine(2503) in 23S rRNA + 5'-deoxyadenosine + L-methionine + 2 oxidized [2Fe-2S]-[ferredoxin] + S-adenosyl-L-homocysteine. It catalyses the reaction adenosine(37) in tRNA + 2 reduced [2Fe-2S]-[ferredoxin] + 2 S-adenosyl-L-methionine = 2-methyladenosine(37) in tRNA + 5'-deoxyadenosine + L-methionine + 2 oxidized [2Fe-2S]-[ferredoxin] + S-adenosyl-L-homocysteine. Specifically methylates position 2 of adenine 2503 in 23S rRNA and position 2 of adenine 37 in tRNAs. m2A2503 modification seems to play a crucial role in the proofreading step occurring at the peptidyl transferase center and thus would serve to optimize ribosomal fidelity. This chain is Dual-specificity RNA methyltransferase RlmN, found in Pseudomonas putida (strain GB-1).